Consider the following 197-residue polypeptide: MPAIDLSTIDLRAIKPSDLDWRKFTLDTGHPMRRIFIWSVAVNMGIGQSGERLEKAAKVMSELTGRTPSYRLAHKSIKDFGIRRGEPIGLLVTLRRNEAVWFLLRALAAVDFTLREESFNAGNVSFGIREHILVPGSRYDPALGIFGFDVAVTLARPGFRVQYRRRARADVGKDHRVSREETIRFFQDVLGVRILKR.

The protein belongs to the universal ribosomal protein uL5 family. As to quaternary structure, part of the 50S ribosomal subunit; contacts the 5S rRNA and probably tRNA. Forms a bridge to the 30S subunit in the 70S ribosome.

Functionally, this is one of the proteins that bind and probably mediate the attachment of the 5S RNA into the large ribosomal subunit, where it forms part of the central protuberance. In the 70S ribosome it contacts protein S13 of the 30S subunit (bridge B1b), connecting the 2 subunits; this bridge is implicated in subunit movement. May contact the P site tRNA; the 5S rRNA and some of its associated proteins might help stabilize positioning of ribosome-bound tRNAs. The sequence is that of Large ribosomal subunit protein uL5 from Caldivirga maquilingensis (strain ATCC 700844 / DSM 13496 / JCM 10307 / IC-167).